A 115-amino-acid polypeptide reads, in one-letter code: MEKMLLKSTTRHVRIFTAEVVNNDLKYHPNKLTLDLDPDNEFIWNEESLKKVNQKFTELVEERAGKSLDDYELRKIGSEVEGLIKYLLQNSLLSYNPECRVMNYSMGLPKTKEVL.

The protein belongs to the complex I NdhM subunit family. As to quaternary structure, NDH-1 can be composed of about 15 different subunits; different subcomplexes with different compositions have been identified which probably have different functions.

The protein localises to the cellular thylakoid membrane. It catalyses the reaction a plastoquinone + NADH + (n+1) H(+)(in) = a plastoquinol + NAD(+) + n H(+)(out). The enzyme catalyses a plastoquinone + NADPH + (n+1) H(+)(in) = a plastoquinol + NADP(+) + n H(+)(out). Functionally, NDH-1 shuttles electrons from an unknown electron donor, via FMN and iron-sulfur (Fe-S) centers, to quinones in the respiratory and/or the photosynthetic chain. The immediate electron acceptor for the enzyme in this species is believed to be plastoquinone. Couples the redox reaction to proton translocation, and thus conserves the redox energy in a proton gradient. Cyanobacterial NDH-1 also plays a role in inorganic carbon-concentration. The chain is NAD(P)H-quinone oxidoreductase subunit M from Prochlorococcus marinus (strain MIT 9515).